The primary structure comprises 274 residues: MRKVAIYGKGGIGKSTTTQNTVAGLAEMGKKIMVIGCDPKADSTRLLLGGLQQKTVLDTLREEGEEVELEDIIKDGYRNTRCTESGGPEPGVGCAGRGIITSVNLLEQLGAFDDEWDLDYVFYDVLGDVVCGGFAMPIRDGKAEEIYIVCSGEMMAMYAANNICKGILKYADTGGVRLGGLICNSRNVDNERQMIEELAKKIGTQMIHFVPRNNFVQRAEINRKTVIEYDPTHEQADEYRALAQKINDNKMFVIPKPLEIEELEALLIEFGIAN.

Glycine 8–serine 15 is a binding site for ATP. Cysteine 94 contributes to the [4Fe-4S] cluster binding site. Residue arginine 97 is modified to ADP-ribosylarginine; by dinitrogenase reductase ADP-ribosyltransferase. Position 131 (cysteine 131) interacts with [4Fe-4S] cluster.

This sequence belongs to the NifH/BchL/ChlL family. In terms of assembly, homodimer. Requires [4Fe-4S] cluster as cofactor. Post-translationally, the reversible ADP-ribosylation of Arg-97 inactivates the nitrogenase reductase and regulates nitrogenase activity.

The enzyme catalyses N2 + 8 reduced [2Fe-2S]-[ferredoxin] + 16 ATP + 16 H2O = H2 + 8 oxidized [2Fe-2S]-[ferredoxin] + 2 NH4(+) + 16 ADP + 16 phosphate + 6 H(+). In terms of biological role, the key enzymatic reactions in nitrogen fixation are catalyzed by the nitrogenase complex, which has 2 components: the iron protein and the molybdenum-iron protein. The chain is Nitrogenase iron protein from Pelodictyon phaeoclathratiforme (strain DSM 5477 / BU-1).